A 297-amino-acid polypeptide reads, in one-letter code: 4-hydroxy-tetrahydrodipicolinate synthase (297 aa).

Threonine 49 lines the pyruvate pocket. Residue tyrosine 137 is the Proton donor/acceptor of the active site. Lysine 166 functions as the Schiff-base intermediate with substrate in the catalytic mechanism. Residue isoleucine 208 participates in pyruvate binding.

The protein belongs to the DapA family. In terms of assembly, homotetramer; dimer of dimers.

It localises to the cytoplasm. The catalysed reaction is L-aspartate 4-semialdehyde + pyruvate = (2S,4S)-4-hydroxy-2,3,4,5-tetrahydrodipicolinate + H2O + H(+). It participates in amino-acid biosynthesis; L-lysine biosynthesis via DAP pathway; (S)-tetrahydrodipicolinate from L-aspartate: step 3/4. Catalyzes the condensation of (S)-aspartate-beta-semialdehyde [(S)-ASA] and pyruvate to 4-hydroxy-tetrahydrodipicolinate (HTPA). This is 4-hydroxy-tetrahydrodipicolinate synthase from Porphyromonas gingivalis (strain ATCC 33277 / DSM 20709 / CIP 103683 / JCM 12257 / NCTC 11834 / 2561).